The sequence spans 481 residues: Phosphoglycerate kinase 1, chloroplastic (481 aa).

The N-terminal 75 residues, Met-1–Val-75, are a transit peptide targeting the chloroplast. Ser-81 is subject to Phosphoserine. Positions 99, 100, 102, 116, 138, 139, 141, 142, 197, 229, and 230 each coordinate (2R)-3-phosphoglycerate. Position 275 (Gly-275) interacts with ADP. Gly-275 is a CDP binding site. Residues Lys-277 and Lys-281 each contribute to the AMP site. ATP is bound at residue Lys-281. Gly-299 lines the ADP pocket. Gly-299 is a binding site for CDP. AMP-binding residues include Gly-300 and Gly-372. ATP is bound by residues Gly-300 and Gly-372. The CDP site is built by Gly-397 and Phe-402. Phe-402 serves as a coordination point for ADP. Glu-403 lines the AMP pocket. Positions 403, 434, and 435 each coordinate ATP. Mg(2+) is bound at residue Asp-434.

It belongs to the phosphoglycerate kinase family. Monomer. Binds to FTSZ2-1 and FTSZ2-2. Requires Mg(2+) as cofactor.

The protein localises to the plastid. It localises to the chloroplast. It carries out the reaction (2R)-3-phosphoglycerate + ATP = (2R)-3-phospho-glyceroyl phosphate + ADP. It participates in carbohydrate biosynthesis; Calvin cycle. Its function is as follows. May trigger the phosphorylation of FTSZ2-1 and FTSZ2-2. This chain is Phosphoglycerate kinase 1, chloroplastic, found in Arabidopsis thaliana (Mouse-ear cress).